The following is a 179-amino-acid chain: Large ribosomal subunit protein uL5 (179 aa).

The protein belongs to the universal ribosomal protein uL5 family. In terms of assembly, part of the 50S ribosomal subunit; part of the 5S rRNA/L5/L18/L25 subcomplex. Contacts the 5S rRNA and the P site tRNA. Forms a bridge to the 30S subunit in the 70S ribosome.

This is one of the proteins that bind and probably mediate the attachment of the 5S RNA into the large ribosomal subunit, where it forms part of the central protuberance. In the 70S ribosome it contacts protein S13 of the 30S subunit (bridge B1b), connecting the 2 subunits; this bridge is implicated in subunit movement. Contacts the P site tRNA; the 5S rRNA and some of its associated proteins might help stabilize positioning of ribosome-bound tRNAs. The polypeptide is Large ribosomal subunit protein uL5 (Halothermothrix orenii (strain H 168 / OCM 544 / DSM 9562)).